The sequence spans 265 residues: Small ribosomal subunit protein uS2 (265 aa).

Residues 231–265 (VEEEYEDYEGAEDDYEYDETEYTDSVIPDDEEEAE) are disordered.

Belongs to the universal ribosomal protein uS2 family.

The protein is Small ribosomal subunit protein uS2 of Trichormus variabilis (strain ATCC 29413 / PCC 7937) (Anabaena variabilis).